Here is a 296-residue protein sequence, read N- to C-terminus: Nucleotide-binding protein SGO_0954 (296 aa).

13–20 serves as a coordination point for ATP; the sequence is GMSGAGKT. 63-66 is a GTP binding site; it reads DMRS.

Belongs to the RapZ-like family.

Functionally, displays ATPase and GTPase activities. This Streptococcus gordonii (strain Challis / ATCC 35105 / BCRC 15272 / CH1 / DL1 / V288) protein is Nucleotide-binding protein SGO_0954.